Reading from the N-terminus, the 447-residue chain is Nisin biosynthesis sensor protein NisK (447 aa).

Helical transmembrane passes span 15-35 and 147-167; these read VIEI…LTFF and TYLF…YHLI. The Histidine kinase domain maps to 235–447; it reads ALSHDVKTPL…GAEVILKIKK (213 aa). A Phosphohistidine; by autocatalysis modification is found at H238.

Its subcellular location is the cell membrane. It carries out the reaction ATP + protein L-histidine = ADP + protein N-phospho-L-histidine.. Functionally, member of the two-component regulatory system NisK/NisR involved in the regulation of the biosynthesis of lantibiotic nisin. NisK may function as a membrane-associated protein kinase that phosphorylates NisR in response to environmental signals. This chain is Nisin biosynthesis sensor protein NisK (nisK), found in Lactococcus lactis subsp. lactis (Streptococcus lactis).